A 497-amino-acid chain; its full sequence is Probable cytosol aminopeptidase (497 aa).

Residues Lys-262 and Asp-267 each contribute to the Mn(2+) site. Lys-274 is an active-site residue. Residues Asp-285, Asp-344, and Glu-346 each coordinate Mn(2+). The active site involves Arg-348.

This sequence belongs to the peptidase M17 family. Requires Mn(2+) as cofactor.

The protein localises to the cytoplasm. It catalyses the reaction Release of an N-terminal amino acid, Xaa-|-Yaa-, in which Xaa is preferably Leu, but may be other amino acids including Pro although not Arg or Lys, and Yaa may be Pro. Amino acid amides and methyl esters are also readily hydrolyzed, but rates on arylamides are exceedingly low.. The catalysed reaction is Release of an N-terminal amino acid, preferentially leucine, but not glutamic or aspartic acids.. Presumably involved in the processing and regular turnover of intracellular proteins. Catalyzes the removal of unsubstituted N-terminal amino acids from various peptides. The protein is Probable cytosol aminopeptidase of Rhizobium etli (strain ATCC 51251 / DSM 11541 / JCM 21823 / NBRC 15573 / CFN 42).